The chain runs to 220 residues: Chalcone--flavanone isomerase B (220 aa).

Thr-50, Asn-115, and Thr-192 together coordinate substrate.

This sequence belongs to the chalcone isomerase family.

It carries out the reaction a chalcone = a flavanone.. It functions in the pathway secondary metabolite biosynthesis; flavonoid biosynthesis. Its function is as follows. Catalyzes the intramolecular cyclization of bicyclic chalcones into tricyclic (S)-flavanones. Responsible for the isomerization of 4,2',4',6'-tetrahydroxychalcone (also termed chalcone) into naringenin. This Petunia hybrida (Petunia) protein is Chalcone--flavanone isomerase B (CHI2).